Consider the following 430-residue polypeptide: Gustatory receptor-like 43a (430 aa).

Residues 1 to 31 (MSTGSHSPEAMWSATNFRRHQRKPNQVLHRW) lie on the Cytoplasmic side of the membrane. A helical transmembrane segment spans residues 32–52 (FFKGSAWIIYAIACGLHFFKL). Residues 53–79 (HYNERTNQVEESQYHRIWSKIVVVLKV) lie on the Extracellular side of the membrane. The chain crosses the membrane as a helical span at residues 80-100 (ILLASPYLQYFVLGLGIYIHI). Topologically, residues 101-110 (TLVQDSKAQN) are cytoplasmic. A helical transmembrane segment spans residues 111–131 (FLMSLIVLGIVIGVLRRLLIF). The Extracellular segment spans residues 132–168 (LHLKRDRRFLKHTVNEILHITSALEQKFGMEYKCDST). The helical transmembrane segment at 169 to 189 (LLVVYLAKLWILTVMLDSLWY) threads the bilayer. The Cytoplasmic segment spans residues 190–277 (KPYFLSSIFL…RDNVSWLSTS (88 aa)). The chain crosses the membrane as a helical span at residues 278–298 (VYLMIFTCIFNAELLIECSLF). Residues 299-306 (AGDELENK) are Extracellular-facing. A helical transmembrane segment spans residues 307-327 (IYIITDGCLGPVCVPILYVLI). Residues 328 to 396 (LGMCTDRFRD…IILDITCDRE (69 aa)) are Cytoplasmic-facing. A helical membrane pass occupies residues 397 to 417 (FVMDYIVTVILTALSLVQYTI). The Extracellular segment spans residues 418-430 (STGGNISECVTHK). N-linked (GlcNAc...) asparagine glycosylation occurs at Asn-422.

It is found in the cell membrane. The polypeptide is Gustatory receptor-like 43a (Drosophila melanogaster (Fruit fly)).